A 113-amino-acid chain; its full sequence is uncharacterized protein (113 aa).

The protein belongs to the ycf68 family.

Its subcellular location is the plastid. The protein localises to the chloroplast. This is an uncharacterized protein from Eucalyptus globulus subsp. globulus (Tasmanian blue gum).